The primary structure comprises 386 residues: Putrescine N-methyltransferase 4 (386 aa).

Polar residues-rich tracts occupy residues methionine 1–phenylalanine 14, glycine 23–asparagine 48, and histidine 57–glutamate 87. Positions methionine 1–glutamate 87 are disordered. The 238-residue stretch at leucine 97–threonine 334 folds into the PABS domain. Residues glutamine 128, glutamate 203, and aspartate 234–glycine 235 each bind S-adenosyl-L-methionine. Aspartate 253 acts as the Proton acceptor in catalysis. Tyrosine 322 provides a ligand contact to S-adenosyl-L-methionine.

Belongs to the class I-like SAM-binding methyltransferase superfamily. Putrescine methyltransferase family. As to expression, predominantly expressed in roots.

The enzyme catalyses putrescine + S-adenosyl-L-methionine = N-methylputrescine + S-adenosyl-L-homocysteine + H(+). Its pathway is alkaloid biosynthesis; nicotine biosynthesis. Involved in the biosynthesis of pyridine alkaloid natural products, leading mainly to the production of anabasine, anatabine, nicotine and nornicotine, effective deterrents against herbivores with antiparasitic and pesticide properties (neurotoxins); nornicotine serves as the precursor in the synthesis of the carcinogen compound N'-nitrosonornicotine (NNN). Methyltransferase that mediates the conversion of putrescine to N-methylputrescine. Promotes leaves ripening. The chain is Putrescine N-methyltransferase 4 from Nicotiana tabacum (Common tobacco).